Reading from the N-terminus, the 295-residue chain is Ethanolamine ammonia-lyase small subunit (295 aa).

Positions 207, 228, and 258 each coordinate adenosylcob(III)alamin.

This sequence belongs to the EutC family. In terms of assembly, the basic unit is a heterodimer which dimerizes to form tetramers. The heterotetramers trimerize; 6 large subunits form a core ring with 6 small subunits projecting outwards. Adenosylcob(III)alamin serves as cofactor.

Its subcellular location is the bacterial microcompartment. It catalyses the reaction ethanolamine = acetaldehyde + NH4(+). It participates in amine and polyamine degradation; ethanolamine degradation. Functionally, catalyzes the deamination of various vicinal amino-alcohols to oxo compounds. Allows this organism to utilize ethanolamine as the sole source of nitrogen and carbon in the presence of external vitamin B12. This is Ethanolamine ammonia-lyase small subunit from Escherichia coli (strain SMS-3-5 / SECEC).